Reading from the N-terminus, the 123-residue chain is DNA-directed RNA polymerase I subunit RPA12 (123 aa).

Zn(2+) contacts are provided by cysteine 17, cysteine 20, cysteine 35, cysteine 38, cysteine 84, and cysteine 87. Residues 17–38 (CPDCGSVLPLPGVQDAVACTRC) form a C4-type zinc finger. Residues 80–120 (VDRRCSRCGHEGMAYHTRQMRSADEGQTVFYTCTNCKFQEK) form a TFIIS-type zinc finger. Positions 103-104 (DE) match the Hairpin motif. 2 residues coordinate Zn(2+): cysteine 112 and cysteine 115.

Belongs to the archaeal RpoM/eukaryotic RPA12/RPB9/RPC11 RNA polymerase family. Component of the RNA polymerase I (Pol I) complex consisting of at least 13 subunits.

It is found in the nucleus. It localises to the nucleolus. Its function is as follows. Core component of RNA polymerase I (Pol I), a DNA-dependent RNA polymerase which synthesizes ribosomal RNA precursors using the four ribonucleoside triphosphates as substrates. Can mediate Pol I proofreading of the nascent RNA transcript. Anchors into the Pol I active site to monitor transcription fidelity and cleave mis-incorporated 5'-ribonucleotides. This chain is DNA-directed RNA polymerase I subunit RPA12, found in Bos taurus (Bovine).